A 238-amino-acid polypeptide reads, in one-letter code: Phosphoribosylaminoimidazole-succinocarboxamide synthase (238 aa).

Belongs to the SAICAR synthetase family.

The catalysed reaction is 5-amino-1-(5-phospho-D-ribosyl)imidazole-4-carboxylate + L-aspartate + ATP = (2S)-2-[5-amino-1-(5-phospho-beta-D-ribosyl)imidazole-4-carboxamido]succinate + ADP + phosphate + 2 H(+). Its pathway is purine metabolism; IMP biosynthesis via de novo pathway; 5-amino-1-(5-phospho-D-ribosyl)imidazole-4-carboxamide from 5-amino-1-(5-phospho-D-ribosyl)imidazole-4-carboxylate: step 1/2. In Desulfitobacterium hafniense (strain DSM 10664 / DCB-2), this protein is Phosphoribosylaminoimidazole-succinocarboxamide synthase.